Reading from the N-terminus, the 492-residue chain is Chitooligosaccharide oxidase (492 aa).

The first 19 residues, 1–19 (MHFNTLTCVLVGLVAHTSA), serve as a signal peptide directing secretion. Residues 57-229 (LPFEPAAIAV…VELEFQTFAA (173 aa)) enclose the FAD-binding PCMH-type domain. Residues 94 to 154 (HSYTSLGFGG…GKRALAHGTC (61 aa)) constitute a cross-link (6-(S-cysteinyl)-8alpha-(pros-histidyl)-FAD (His-Cys)).

This sequence belongs to the oxygen-dependent FAD-linked oxidoreductase family. It depends on FAD as a cofactor. In terms of processing, the FAD cofactor is bound via a bicovalent 6-S-cysteinyl, 8alpha-N1-histidyl FAD linkage.

It localises to the secreted. The catalysed reaction is N,N'-diacetylchitobiose + O2 = N,N'-diacetylchitobiono-1,5-lactone + H2O2. It catalyses the reaction N,N',N''-triacetylchitotriose + O2 = N,N',N''-triacetylchitotriono-1,5-lactone + H2O2. It carries out the reaction N,N',N'',N'''-tetraacetylchitotetraose + O2 = N,N',N'',N'''-tetraacetylchitotetraono-1,5-lactone + H2O2. Catalyzes the selective oxidation of C1 hydroxyl moieties on chitooligosaccharides with concomitant reduction of molecular oxygen to hydrogen peroxide. This results in the formation of the corresponding lactones, which typically undergo spontaneous hydrolysis. Chitooligosaccharides are homo- or heterooligomers of N-acetylglucosamine (GlcNAc) and D-glucosamine which are linked through beta-1,4-glycosidic bonds. For optimal substrate binding at least 2 GlcNAc units are needed, and chitooligosaccharide oxidase is most efficient on chitobiose, chitotriose and chitotetraose. In Gibberella zeae (strain ATCC MYA-4620 / CBS 123657 / FGSC 9075 / NRRL 31084 / PH-1) (Wheat head blight fungus), this protein is Chitooligosaccharide oxidase.